A 462-amino-acid chain; its full sequence is Succinate semialdehyde dehydrogenase [NAD(P)+] Sad (462 aa).

Residues 136–137, 160–163, and 212–213 each bind NADP(+); these read WN, KHAP, and GS. E234 acts as the Proton acceptor in catalysis. Residue L235 coordinates NADP(+). The active-site Nucleophile is C268. E365 contacts NADP(+).

This sequence belongs to the aldehyde dehydrogenase family. Homodimer.

It carries out the reaction succinate semialdehyde + NAD(+) + H2O = succinate + NADH + 2 H(+). It catalyses the reaction succinate semialdehyde + NADP(+) + H2O = succinate + NADPH + 2 H(+). The protein operates within amino-acid degradation; 4-aminobutanoate degradation. Catalyzes the NAD(+)-dependent oxidation of succinate semialdehyde to succinate. It acts preferentially with NAD as cosubstrate but can also use NADP. Prevents the toxic accumulation of succinate semialdehyde (SSA) and plays an important role when arginine and putrescine are used as the sole nitrogen or carbon sources. This is Succinate semialdehyde dehydrogenase [NAD(P)+] Sad (sad) from Escherichia coli (strain K12).